Here is a 284-residue protein sequence, read N- to C-terminus: L-ribulose-5-phosphate 3-epimerase UlaE (284 aa).

This sequence belongs to the L-ribulose-5-phosphate 3-epimerase family.

It catalyses the reaction L-ribulose 5-phosphate = L-xylulose 5-phosphate. It functions in the pathway cofactor degradation; L-ascorbate degradation; D-xylulose 5-phosphate from L-ascorbate: step 3/4. Its function is as follows. Catalyzes the isomerization of L-xylulose-5-phosphate to L-ribulose-5-phosphate. Is involved in the anaerobic L-ascorbate utilization. In Escherichia coli (strain ATCC 8739 / DSM 1576 / NBRC 3972 / NCIMB 8545 / WDCM 00012 / Crooks), this protein is L-ribulose-5-phosphate 3-epimerase UlaE.